The chain runs to 59 residues: Large ribosomal subunit protein uL30 (59 aa).

Belongs to the universal ribosomal protein uL30 family. As to quaternary structure, part of the 50S ribosomal subunit.

In Photobacterium profundum (strain SS9), this protein is Large ribosomal subunit protein uL30.